Reading from the N-terminus, the 130-residue chain is Ribosome-binding factor A (130 aa).

It belongs to the RbfA family. As to quaternary structure, monomer. Binds 30S ribosomal subunits, but not 50S ribosomal subunits or 70S ribosomes.

It is found in the cytoplasm. One of several proteins that assist in the late maturation steps of the functional core of the 30S ribosomal subunit. Associates with free 30S ribosomal subunits (but not with 30S subunits that are part of 70S ribosomes or polysomes). Required for efficient processing of 16S rRNA. May interact with the 5'-terminal helix region of 16S rRNA. This chain is Ribosome-binding factor A, found in Alkalilimnicola ehrlichii (strain ATCC BAA-1101 / DSM 17681 / MLHE-1).